The primary structure comprises 879 residues: Alanine--tRNA ligase (879 aa).

Histidine 566, histidine 570, cysteine 668, and histidine 672 together coordinate Zn(2+).

The protein belongs to the class-II aminoacyl-tRNA synthetase family. It depends on Zn(2+) as a cofactor.

The protein resides in the cytoplasm. The catalysed reaction is tRNA(Ala) + L-alanine + ATP = L-alanyl-tRNA(Ala) + AMP + diphosphate. Functionally, catalyzes the attachment of alanine to tRNA(Ala) in a two-step reaction: alanine is first activated by ATP to form Ala-AMP and then transferred to the acceptor end of tRNA(Ala). Also edits incorrectly charged Ser-tRNA(Ala) and Gly-tRNA(Ala) via its editing domain. In Clostridium novyi (strain NT), this protein is Alanine--tRNA ligase.